Consider the following 77-residue polypeptide: Putative antitoxin MazE7 (77 aa).

The segment at 49 to 77 (REASHAETTTQAVRDEDREWEGTVGDGLG) is disordered.

In terms of assembly, forms a complex with cognate toxin MazF7.

Antitoxin component of a type II toxin-antitoxin (TA) system. This chain is Putative antitoxin MazE7 (mazE7), found in Mycobacterium tuberculosis (strain CDC 1551 / Oshkosh).